Consider the following 399-residue polypeptide: Formate-dependent phosphoribosylglycinamide formyltransferase (399 aa).

N(1)-(5-phospho-beta-D-ribosyl)glycinamide is bound by residues 8–9 (EL) and Glu-68. Residues Arg-100, Lys-141, 146 to 151 (SSGHGQ), 185 to 188 (EALA), and Glu-193 contribute to the ATP site. Residues 105–308 (VLAHEELGLP…EFALHARAIL (204 aa)) enclose the ATP-grasp domain. Mg(2+) is bound by residues Glu-266 and Glu-279. N(1)-(5-phospho-beta-D-ribosyl)glycinamide-binding positions include Asp-286, Lys-361, and 368 to 369 (RR).

The protein belongs to the PurK/PurT family. Homodimer.

It catalyses the reaction N(1)-(5-phospho-beta-D-ribosyl)glycinamide + formate + ATP = N(2)-formyl-N(1)-(5-phospho-beta-D-ribosyl)glycinamide + ADP + phosphate + H(+). Its pathway is purine metabolism; IMP biosynthesis via de novo pathway; N(2)-formyl-N(1)-(5-phospho-D-ribosyl)glycinamide from N(1)-(5-phospho-D-ribosyl)glycinamide (formate route): step 1/1. In terms of biological role, involved in the de novo purine biosynthesis. Catalyzes the transfer of formate to 5-phospho-ribosyl-glycinamide (GAR), producing 5-phospho-ribosyl-N-formylglycinamide (FGAR). Formate is provided by PurU via hydrolysis of 10-formyl-tetrahydrofolate. In Bifidobacterium adolescentis (strain ATCC 15703 / DSM 20083 / NCTC 11814 / E194a), this protein is Formate-dependent phosphoribosylglycinamide formyltransferase.